The sequence spans 119 residues: FAD-linked sulfhydryl oxidase (119 aa).

The region spanning 1 to 97 is the ERV/ALR sulfhydryl oxidase domain; sequence MLHWGPKFWR…ISWSEYKNIY (97 aa). Cys44 and Cys47 are disulfide-bonded.

The protein belongs to the asfivirus B119L family. In terms of assembly, interacts with A151R. The cofactor is FAD.

It is found in the host cytoplasm. The protein resides in the virion. The enzyme catalyses 2 R'C(R)SH + O2 = R'C(R)S-S(R)CR' + H2O2. FAD-dependent sulfhydryl oxidase that catalyzes the formation of disulfide bonds in viral proteins produced in the cell cytoplasm. Involved in virion maturation. This chain is FAD-linked sulfhydryl oxidase, found in Ornithodoros (relapsing fever ticks).